The chain runs to 150 residues: Globin-3 (150 aa).

A Globin domain is found at 11 to 150 (PLSAAEKTKI…MICILLRSAY (140 aa)). Residues H74 and H106 each contribute to the heme b site.

The protein belongs to the globin family. Monomer.

The sequence is that of Globin-3 from Petromyzon marinus (Sea lamprey).